Here is a 475-residue protein sequence, read N- to C-terminus: ATP synthase subunit beta (475 aa).

Residue 152–159 (GGAGVGKT) coordinates ATP.

It belongs to the ATPase alpha/beta chains family. In terms of assembly, F-type ATPases have 2 components, CF(1) - the catalytic core - and CF(0) - the membrane proton channel. CF(1) has five subunits: alpha(3), beta(3), gamma(1), delta(1), epsilon(1). CF(0) has three main subunits: a(1), b(2) and c(9-12). The alpha and beta chains form an alternating ring which encloses part of the gamma chain. CF(1) is attached to CF(0) by a central stalk formed by the gamma and epsilon chains, while a peripheral stalk is formed by the delta and b chains.

Its subcellular location is the cell membrane. The enzyme catalyses ATP + H2O + 4 H(+)(in) = ADP + phosphate + 5 H(+)(out). In terms of biological role, produces ATP from ADP in the presence of a proton gradient across the membrane. The catalytic sites are hosted primarily by the beta subunits. The protein is ATP synthase subunit beta of Wolbachia pipientis wMel.